A 184-amino-acid polypeptide reads, in one-letter code: Shikimate kinase (184 aa).

Gly-17–Thr-22 is an ATP binding site. Thr-21 serves as a coordination point for Mg(2+). Substrate-binding residues include Asp-39, Arg-63, and Gly-85. Arg-123 provides a ligand contact to ATP. Arg-142 provides a ligand contact to substrate.

Belongs to the shikimate kinase family. In terms of assembly, monomer. It depends on Mg(2+) as a cofactor.

It localises to the cytoplasm. The enzyme catalyses shikimate + ATP = 3-phosphoshikimate + ADP + H(+). The protein operates within metabolic intermediate biosynthesis; chorismate biosynthesis; chorismate from D-erythrose 4-phosphate and phosphoenolpyruvate: step 5/7. Catalyzes the specific phosphorylation of the 3-hydroxyl group of shikimic acid using ATP as a cosubstrate. The polypeptide is Shikimate kinase (Burkholderia pseudomallei (strain 1710b)).